The sequence spans 289 residues: 4-hydroxy-tetrahydrodipicolinate synthase (289 aa).

Position 46 (Thr46) interacts with pyruvate. Tyr134 serves as the catalytic Proton donor/acceptor. The active-site Schiff-base intermediate with substrate is the Lys162. Residue Val204 participates in pyruvate binding.

This sequence belongs to the DapA family. In terms of assembly, homotetramer; dimer of dimers.

Its subcellular location is the cytoplasm. It catalyses the reaction L-aspartate 4-semialdehyde + pyruvate = (2S,4S)-4-hydroxy-2,3,4,5-tetrahydrodipicolinate + H2O + H(+). The protein operates within amino-acid biosynthesis; L-lysine biosynthesis via DAP pathway; (S)-tetrahydrodipicolinate from L-aspartate: step 3/4. Catalyzes the condensation of (S)-aspartate-beta-semialdehyde [(S)-ASA] and pyruvate to 4-hydroxy-tetrahydrodipicolinate (HTPA). This chain is 4-hydroxy-tetrahydrodipicolinate synthase, found in Bacillus velezensis (strain DSM 23117 / BGSC 10A6 / LMG 26770 / FZB42) (Bacillus amyloliquefaciens subsp. plantarum).